The sequence spans 165 residues: Phosphopantetheine adenylyltransferase (165 aa).

Position 10 (Thr10) interacts with substrate. Residues Thr10–Phe11 and His18 contribute to the ATP site. 3 residues coordinate substrate: Lys42, Leu74, and Arg88. ATP-binding positions include Gly89–Arg91, Glu99, and Asn124–Ser130.

Belongs to the bacterial CoaD family. In terms of assembly, homohexamer. The cofactor is Mg(2+).

The protein localises to the cytoplasm. It catalyses the reaction (R)-4'-phosphopantetheine + ATP + H(+) = 3'-dephospho-CoA + diphosphate. Its pathway is cofactor biosynthesis; coenzyme A biosynthesis; CoA from (R)-pantothenate: step 4/5. Reversibly transfers an adenylyl group from ATP to 4'-phosphopantetheine, yielding dephospho-CoA (dPCoA) and pyrophosphate. This Helicobacter hepaticus (strain ATCC 51449 / 3B1) protein is Phosphopantetheine adenylyltransferase.